The following is a 613-amino-acid chain: Zinc metalloproteinase-disintegrin-like MTP4 (613 aa).

Positions 1 to 20 (MIEVLLVTICFTVFPYQGSS) are cleaved as a signal peptide. The propeptide occupies 21-191 (IILESGNVND…DEPIEKISQL (171 aa)). Residues 205–401 (KYIELYVVVD…VRPQCILNKP (197 aa)) form the Peptidase M12B domain. Ca(2+) is bound at residue Glu208. N-linked (GlcNAc...) asparagine glycosylation is present at Asn282. Asp292 contacts Ca(2+). Cystine bridges form between Cys316-Cys396, Cys356-Cys380, and Cys358-Cys363. His341, His345, and His351 together coordinate Zn(2+). The Ca(2+) site is built by Cys396, Asn399, Asn414, Phe416, Glu418, Glu421, and Asp424. Residues 409–495 (PPVCGNYFVE…KCPTDSFQRN (87 aa)) enclose the Disintegrin domain. Intrachain disulfides connect Cys412/Cys441, Cys423/Cys436, Cys425/Cys431, Cys435/Cys458, Cys449/Cys455, Cys454/Cys480, Cys467/Cys487, Cys474/Cys506, Cys499/Cys511, Cys518/Cys568, Cys533/Cys575, Cys543/Cys577, Cys546/Cys556, Cys563/Cys601, and Cys595/Cys606. The N-linked (GlcNAc...) asparagine glycan is linked to Asn437. The D/ECD-tripeptide motif lies at 473 to 475 (DCD). Ca(2+)-binding residues include Asp475, Leu476, Glu478, and Asp490. The interval 561 to 574 (KMCGKLLCEKGNAT) is hypervariable region that may play important roles toward cell migration. N-linked (GlcNAc...) asparagine glycosylation occurs at Asn572.

This sequence belongs to the venom metalloproteinase (M12B) family. P-III subfamily. As to quaternary structure, monomer. The cofactor is Zn(2+). Expressed by the venom gland.

Its subcellular location is the secreted. Its function is as follows. Snake venom zinc metalloproteinase that may impair hemostasis in the prey. This is Zinc metalloproteinase-disintegrin-like MTP4 from Drysdalia coronoides (White-lipped snake).